A 693-amino-acid chain; its full sequence is Elongation factor G (693 aa).

In terms of domain architecture, tr-type G spans 8–283 (NKVRNFGIAA…AVCDYLPSPL (276 aa)). GTP contacts are provided by residues 17–24 (AHIDAGKT), 81–85 (DTPGH), and 135–138 (NKMD).

It belongs to the TRAFAC class translation factor GTPase superfamily. Classic translation factor GTPase family. EF-G/EF-2 subfamily.

The protein localises to the cytoplasm. Its function is as follows. Catalyzes the GTP-dependent ribosomal translocation step during translation elongation. During this step, the ribosome changes from the pre-translocational (PRE) to the post-translocational (POST) state as the newly formed A-site-bound peptidyl-tRNA and P-site-bound deacylated tRNA move to the P and E sites, respectively. Catalyzes the coordinated movement of the two tRNA molecules, the mRNA and conformational changes in the ribosome. This chain is Elongation factor G, found in Endomicrobium trichonymphae.